Reading from the N-terminus, the 161-residue chain is UPF0225 protein GSU1048 (161 aa).

It belongs to the UPF0225 family.

This is UPF0225 protein GSU1048 from Geobacter sulfurreducens (strain ATCC 51573 / DSM 12127 / PCA).